Consider the following 267-residue polypeptide: MEMO1 family protein aq_890 (267 aa).

The protein belongs to the MEMO1 family.

In Aquifex aeolicus (strain VF5), this protein is MEMO1 family protein aq_890.